The primary structure comprises 462 residues: Acetyl-CoA decarbonylase/synthase complex subunit gamma (462 aa).

The region spanning 1–60 (MAQLSAMDVYNLLPKANCGACGCKTCMEFATKLVNREAKPEDCPKLDDESLEKLQELLAP) is the 4Fe-4S domain. Cys-18, Cys-21, Cys-26, and Cys-43 together coordinate [4Fe-4S] cluster.

As to quaternary structure, heterodimer of delta and gamma chains. The ACDS complex is made up of alpha, epsilon, beta, gamma and delta chains with a probable stoichiometry of (alpha(2)epsilon(2))(4)-beta(8)-(gamma(1)delta(1))(8). Corrinoid serves as cofactor. It depends on [4Fe-4S] cluster as a cofactor.

The catalysed reaction is 5,6,7,8-tetrahydrosarcinapterin + methyl-Co(III)-[corrinoid Fe-S protein] = 5-methyltetrahydrosarcinapterin + Co(I)-[corrinoid Fe-S protein] + H(+). Functionally, part of a complex that catalyzes the reversible cleavage of acetyl-CoA, allowing autotrophic growth from CO(2). In Methanopyrus kandleri (strain AV19 / DSM 6324 / JCM 9639 / NBRC 100938), this protein is Acetyl-CoA decarbonylase/synthase complex subunit gamma.